The primary structure comprises 1252 residues: Protein ITPRID2 (1252 aa).

The tract at residues Cys28–Asn70 is disordered. Residues Glu36–Leu57 are compositionally biased toward acidic residues. Thr85 bears the Phosphothreonine mark. 5 positions are modified to phosphoserine: Ser90, Ser109, Ser207, Ser268, and Ser328. Disordered regions lie at residues Asp306–Ala483, His552–Gln575, and Phe595–Pro636. A compositionally biased stretch (low complexity) spans Thr357–Ser372. Composition is skewed to basic and acidic residues over residues Ser395 to Arg407 and Asp415 to Leu428. The segment covering Glu429–Ser441 has biased composition (low complexity). Phosphoserine is present on Ser465. Phosphoserine occurs at positions 643, 667, 736, 738, 745, 758, and 766. Lys807 is covalently cross-linked (Glycyl lysine isopeptide (Lys-Gly) (interchain with G-Cter in SUMO2)). Phosphoserine occurs at positions 866 and 898. Residues Gln955–Ala1031 are a coiled coil. Phosphoserine is present on residues Ser1036, Ser1051, Ser1056, Ser1059, and Ser1114. Disordered regions lie at residues Gly1095–Pro1131 and Ala1147–Val1180. A compositionally biased stretch (low complexity) spans Ser1103 to Ser1117. Thr1149 carries the phosphothreonine modification. The span at Thr1151–Thr1161 shows a compositional bias: polar residues. Ser1154 is subject to Phosphoserine. Thr1161 carries the post-translational modification Phosphothreonine.

The protein resides in the cytoplasm. The polypeptide is Protein ITPRID2 (Itprid2) (Mus musculus (Mouse)).